A 75-amino-acid polypeptide reads, in one-letter code: Exodeoxyribonuclease 7 small subunit (75 aa).

It belongs to the XseB family. As to quaternary structure, heterooligomer composed of large and small subunits.

It localises to the cytoplasm. It catalyses the reaction Exonucleolytic cleavage in either 5'- to 3'- or 3'- to 5'-direction to yield nucleoside 5'-phosphates.. Bidirectionally degrades single-stranded DNA into large acid-insoluble oligonucleotides, which are then degraded further into small acid-soluble oligonucleotides. The polypeptide is Exodeoxyribonuclease 7 small subunit (Chlamydia felis (strain Fe/C-56) (Chlamydophila felis)).